The sequence spans 190 residues: Elongation factor P (190 aa).

At Lys34 the chain carries N6-(3,6-diaminohexanoyl)-5-hydroxylysine.

The protein belongs to the elongation factor P family. May be beta-lysylated on the epsilon-amino group of Lys-34 by the combined action of EpmA and EpmB, and then hydroxylated on the C5 position of the same residue by EpmC (if this protein is present). Lysylation is critical for the stimulatory effect of EF-P on peptide-bond formation. The lysylation moiety may extend toward the peptidyltransferase center and stabilize the terminal 3-CCA end of the tRNA. Hydroxylation of the C5 position on Lys-34 may allow additional potential stabilizing hydrogen-bond interactions with the P-tRNA.

It is found in the cytoplasm. It participates in protein biosynthesis; polypeptide chain elongation. Its function is as follows. Involved in peptide bond synthesis. Alleviates ribosome stalling that occurs when 3 or more consecutive Pro residues or the sequence PPG is present in a protein, possibly by augmenting the peptidyl transferase activity of the ribosome. Modification of Lys-34 is required for alleviation. This chain is Elongation factor P, found in Hahella chejuensis (strain KCTC 2396).